Reading from the N-terminus, the 305-residue chain is Acyl transferase (305 aa).

Active-site charge relay system residues include serine 116, aspartate 213, and histidine 243.

The protein belongs to the LuxD family.

It functions in the pathway lipid metabolism; fatty acid reduction for biolumincescence. In terms of biological role, acyl transferase is part of the fatty acid reductase system required for aldehyde biosynthesis; it produces fatty acids for the luminescent reaction. This chain is Acyl transferase, found in Photobacterium leiognathi.